We begin with the raw amino-acid sequence, 215 residues long: Phosphatidylserine decarboxylase proenzyme (215 aa).

Serine 185 acts as the Schiff-base intermediate with substrate; via pyruvic acid in catalysis. A Pyruvic acid (Ser); by autocatalysis modification is found at serine 185.

This sequence belongs to the phosphatidylserine decarboxylase family. PSD-A subfamily. As to quaternary structure, heterodimer of a large membrane-associated beta subunit and a small pyruvoyl-containing alpha subunit. The cofactor is pyruvate. In terms of processing, is synthesized initially as an inactive proenzyme. Formation of the active enzyme involves a self-maturation process in which the active site pyruvoyl group is generated from an internal serine residue via an autocatalytic post-translational modification. Two non-identical subunits are generated from the proenzyme in this reaction, and the pyruvate is formed at the N-terminus of the alpha chain, which is derived from the carboxyl end of the proenzyme. The post-translation cleavage follows an unusual pathway, termed non-hydrolytic serinolysis, in which the side chain hydroxyl group of the serine supplies its oxygen atom to form the C-terminus of the beta chain, while the remainder of the serine residue undergoes an oxidative deamination to produce ammonia and the pyruvoyl prosthetic group on the alpha chain.

Its subcellular location is the cell membrane. It catalyses the reaction a 1,2-diacyl-sn-glycero-3-phospho-L-serine + H(+) = a 1,2-diacyl-sn-glycero-3-phosphoethanolamine + CO2. Its pathway is phospholipid metabolism; phosphatidylethanolamine biosynthesis; phosphatidylethanolamine from CDP-diacylglycerol: step 2/2. Its function is as follows. Catalyzes the formation of phosphatidylethanolamine (PtdEtn) from phosphatidylserine (PtdSer). The polypeptide is Phosphatidylserine decarboxylase proenzyme (Streptomyces avermitilis (strain ATCC 31267 / DSM 46492 / JCM 5070 / NBRC 14893 / NCIMB 12804 / NRRL 8165 / MA-4680)).